The sequence spans 738 residues: YTH domain-containing protein 1 (738 aa).

Positions 1–12 are enriched in basic and acidic residues; that stretch reads MAADSREEKDGE. The disordered stretch occupies residues 1–341; sequence MAADSREEKD…KHEKLSSSVR (341 aa). At Ser35 the chain carries Phosphoserine. Positions 50–59 are enriched in basic and acidic residues; sequence ERMESIDTKR. Positions 63–90 are enriched in polar residues; sequence SIHSRQLISKPLSSSVSNNKRIVSTKGK. The segment covering 91-115 has biased composition (basic and acidic residues); it reads SVTEYKNEEYQRSERNKRLDADRKI. A Glycyl lysine isopeptide (Lys-Gly) (interchain with G-Cter in SUMO2) cross-link involves residue Lys96. A phosphoserine mark is found at Ser118 and Ser120. Residues 124 to 144 are compositionally biased toward basic and acidic residues; sequence EPYKSQPEKPCLRKRDSERRA. Phosphoserine is present on Ser146. Thr148 carries the post-translational modification Phosphothreonine. 2 stretches are compositionally biased toward basic and acidic residues: residues 151–163 and 170–185; these read GSERIGLEVDRRA and SKEEGNSEEYGSDHET. Residues 186–197 show a composition bias toward polar residues; the sequence is GSSASSEQGNNT. The span at 198 to 257 shows a compositional bias: acidic residues; sequence ENEEEGGEEDVEEDEEVDEDGDDDEEVDEDAEEEEDEEEDEEEEDEEEEEEEEEEYEQDE. The span at 258–273 shows a compositional bias: basic and acidic residues; sequence RDQKEEGNDYDTRSEA. Over residues 283 to 292 the composition is skewed to polar residues; sequence FTDGSVRSGS. 5 positions are modified to phosphoserine: Ser311, Ser318, Ser320, Ser321, and Ser323. Low complexity predominate over residues 318-328; sequence SGSSASESYAG. A YTH domain is found at 358–495; it reads ARFFLIKSNN…ECGTQLCLLF (138 aa). RNA contacts are provided by residues 364–366 and Trp380; that span reads KSN. Ser427 is modified (phosphoserine). Trp431 provides a ligand contact to RNA. Ser438 bears the Phosphoserine mark. Asp479 contacts RNA. A compositionally biased stretch (basic residues) spans 512–526; sequence HKRRMHSQPRSRGRP. 3 disordered regions span residues 512 to 566, 618 to 654, and 680 to 738; these read HKRR…RPGY, GMPPYPGIEQPPHHPYYQHHAPPPQAHPPYSGHHPVP, and AVVS…RYRR. Residues 527–566 are compositionally biased toward basic and acidic residues; the sequence is SRREPVRDVGRRRPEDYDIHNSRKKPRIDYPPEFHQRPGY. Position 548 is a phosphoserine (Ser548). The segment covering 690 to 738 has biased composition (basic and acidic residues); it reads RERDRERERDRPRDNRRDRERDRGRDRERERERICDRDRDRGERGRYRR.

Interacts with SRSF1. Interacts with SRSF2. Interacts with SRSF3. Interacts with SRSF7. Interacts with SRSF10. Interacts with CPSF6. Interacts with KHDRBS1/SAM68. Interacts with TRA2B. Interacts with KHDRBS3. Interacts with EMD. Interacts with RBMX. Interacts with ZCCHC8. Tyrosine phosphorylated. As to expression, ubiquitous.

It localises to the nucleus. The protein resides in the nucleus speckle. Functionally, regulator of alternative splicing that specifically recognizes and binds N6-methyladenosine (m6A)-containing RNAs. M6A is a modification present at internal sites of mRNAs and some non-coding RNAs and plays a role in the efficiency of mRNA splicing, processing and stability. Acts as a key regulator of exon-inclusion or exon-skipping during alternative splicing via interaction with mRNA splicing factors SRSF3 and SRSF10. Specifically binds m6A-containing mRNAs and promotes recruitment of SRSF3 to its mRNA-binding elements adjacent to m6A sites, leading to exon-inclusion during alternative splicing. In contrast, interaction with SRSF3 prevents interaction with SRSF10, a splicing factor that promotes exon skipping: this prevents SRSF10 from binding to its mRNA-binding sites close to m6A-containing regions, leading to inhibit exon skipping during alternative splicing. May also regulate alternative splice site selection. Also involved in nuclear export of m6A-containing mRNAs via interaction with SRSF3: interaction with SRSF3 facilitates m6A-containing mRNA-binding to both SRSF3 and NXF1, promoting mRNA nuclear export. Involved in S-adenosyl-L-methionine homeostasis by regulating expression of MAT2A transcripts, probably by binding m6A-containing MAT2A mRNAs. Also recognizes and binds m6A on other RNA molecules. Involved in random X inactivation mediated by Xist RNA: recognizes and binds m6A-containing Xist and promotes transcription repression activity of Xist. Also recognizes and binds m6A-containing single-stranded DNA. Involved in germline development: required for spermatogonial development in males and oocyte growth and maturation in females, probably via its role in alternative splicing. This Rattus norvegicus (Rat) protein is YTH domain-containing protein 1 (Ythdc1).